We begin with the raw amino-acid sequence, 362 residues long: Phosphoserine aminotransferase (362 aa).

L-glutamate contacts are provided by Ser9 and Arg42. Residues 76–77 (GR), Trp102, Thr153, Asp174, and Gln197 contribute to the pyridoxal 5'-phosphate site. Lys198 carries the post-translational modification N6-(pyridoxal phosphate)lysine. Pyridoxal 5'-phosphate is bound at residue 239-240 (NT).

It belongs to the class-V pyridoxal-phosphate-dependent aminotransferase family. SerC subfamily. Homodimer. It depends on pyridoxal 5'-phosphate as a cofactor.

The protein resides in the cytoplasm. It carries out the reaction O-phospho-L-serine + 2-oxoglutarate = 3-phosphooxypyruvate + L-glutamate. It catalyses the reaction 4-(phosphooxy)-L-threonine + 2-oxoglutarate = (R)-3-hydroxy-2-oxo-4-phosphooxybutanoate + L-glutamate. It functions in the pathway amino-acid biosynthesis; L-serine biosynthesis; L-serine from 3-phospho-D-glycerate: step 2/3. The protein operates within cofactor biosynthesis; pyridoxine 5'-phosphate biosynthesis; pyridoxine 5'-phosphate from D-erythrose 4-phosphate: step 3/5. In terms of biological role, catalyzes the reversible conversion of 3-phosphohydroxypyruvate to phosphoserine and of 3-hydroxy-2-oxo-4-phosphonooxybutanoate to phosphohydroxythreonine. In Escherichia coli O17:K52:H18 (strain UMN026 / ExPEC), this protein is Phosphoserine aminotransferase.